Reading from the N-terminus, the 290-residue chain is Chloride intracellular channel exc-4 (290 aa).

A helical transmembrane segment spans residues 37-57 (LFCQEFWMELYALYEIGVARV).

Belongs to the chloride channel CLIC family. Monomer. As to expression, expressed in the secretory system, hypodermis, vulva, pharyngeal muscle, rectal gland, tubular rectal epithelium cells, and tubular neuronal support cells in the head and tail.

It is found in the cytoplasm. The protein localises to the membrane. May insert into membranes and form chloride ion channels. Involved in the formation of the excretory canal. Required to prevent cystic lumenal expansions in the excretory cell. Not required for formation of the initial tube, but is required for regulating the size of the tube lumen as it grows. The chain is Chloride intracellular channel exc-4 (exc-4) from Caenorhabditis elegans.